Reading from the N-terminus, the 309-residue chain is Probable 2,4-dienoyl-CoA reductase decr-1.2 [(3E)-enoyl-CoA-producing] (309 aa).

Residues 28 to 60, 32 to 37, Arg-57, and Asp-83 each bind NADP(+); these read VLVT…RRME and GGGTGI. Arg-57 provides a ligand contact to substrate. Positions 116 and 124 each coordinate substrate. Catalysis depends on Tyr-166, which acts as the Proton acceptor. NADP(+) contacts are provided by residues Lys-181 and 207 to 210; that span reads PGPI. Arg-218 contributes to the substrate binding site.

The protein belongs to the short-chain dehydrogenases/reductases (SDR) family. 2,4-dienoyl-CoA reductase subfamily.

It catalyses the reaction a (2E,4E)-dienoyl-CoA + NADPH + H(+) = a 4,5-saturated-(3E)-enoyl-CoA + NADP(+). It carries out the reaction a (2E,4Z)-dienoyl-CoA + NADPH + H(+) = a 4,5-saturated-(3E)-enoyl-CoA + NADP(+). Auxiliary enzyme of beta-oxidation. It participates in the metabolism of unsaturated fatty enoyl-CoA esters having double bonds in both even- and odd-numbered positions. Catalyzes the NADP-dependent reduction of 2,4-dienoyl-CoA to yield trans-3-enoyl-CoA. The chain is Probable 2,4-dienoyl-CoA reductase decr-1.2 [(3E)-enoyl-CoA-producing] from Caenorhabditis elegans.